Consider the following 99-residue polypeptide: uncharacterized protein (99 aa).

Residues 50–77 (SAHWEDARSSGGTSPIRARAGSEGRGCQ) are disordered.

This is an uncharacterized protein from Homo sapiens (Human).